We begin with the raw amino-acid sequence, 172 residues long: Translationally-controlled tumor protein homolog (172 aa).

Positions 1–172 constitute a TCTP domain; it reads MKIYKDIITG…FKHGLDEEKC (172 aa).

Belongs to the TCTP family.

It localises to the cytoplasm. Functionally, involved in calcium binding and microtubule stabilization. This Drosophila yakuba (Fruit fly) protein is Translationally-controlled tumor protein homolog.